A 362-amino-acid chain; its full sequence is sn-glycerol-3-phosphate import ATP-binding protein UgpC (362 aa).

Residues 4–235 (LSFRNVKKTY…PASTFVAGFI (232 aa)) enclose the ABC transporter domain. 37-44 (GPSGCGKS) is an ATP binding site.

Belongs to the ABC transporter superfamily. sn-glycerol-3-phosphate importer (TC 3.A.1.1.3) family. In terms of assembly, the complex is composed of two ATP-binding proteins (UgpC), two transmembrane proteins (UgpA and UgpE) and a solute-binding protein (UgpB).

It localises to the cell inner membrane. The catalysed reaction is sn-glycerol 3-phosphate(out) + ATP + H2O = sn-glycerol 3-phosphate(in) + ADP + phosphate + H(+). Part of the ABC transporter complex UgpBAEC involved in sn-glycerol-3-phosphate (G3P) import. Responsible for energy coupling to the transport system. The protein is sn-glycerol-3-phosphate import ATP-binding protein UgpC of Bordetella bronchiseptica (strain ATCC BAA-588 / NCTC 13252 / RB50) (Alcaligenes bronchisepticus).